We begin with the raw amino-acid sequence, 267 residues long: Mediator of RNA polymerase II transcription subunit 8 (267 aa).

Coiled coils occupy residues 1 to 26 (MQRE…KNSL) and 116 to 160 (DVEE…EERE). Positions 190-267 (GLSNRRPPGQ…KSASMHPYQR (78 aa)) are disordered. The span at 227–245 (PPNQQQQHMAGVSMSQGSQ) shows a compositional bias: polar residues.

Belongs to the Mediator complex subunit 8 family. As to quaternary structure, component of the Mediator complex. May be part of a multisubunit E3 ubiquitin-protein ligase complex.

The protein localises to the nucleus. The protein operates within protein modification; protein ubiquitination. Functionally, component of the Mediator complex, a coactivator involved in the regulated transcription of nearly all RNA polymerase II-dependent genes. Mediator functions as a bridge to convey information from gene-specific regulatory proteins to the basal RNA polymerase II transcription machinery. Mediator is recruited to promoters by direct interactions with regulatory proteins and serves as a scaffold for the assembly of a functional preinitiation complex with RNA polymerase II and the general transcription factors. May play a role as a target recruitment subunit in E3 ubiquitin-protein ligase complexes and thus in ubiquitination and subsequent proteasomal degradation of target proteins. The sequence is that of Mediator of RNA polymerase II transcription subunit 8 (med8) from Xenopus tropicalis (Western clawed frog).